We begin with the raw amino-acid sequence, 79 residues long: Small polypeptide DEVIL 8 (79 aa).

Polar residues predominate over residues 1-12 (MSRLRNSAQLQL). The interval 1-37 (MSRLRNSAQLQLSKKESLGDNGGALNTTRSSRQKQGK) is disordered. Residue asparagine 26 is glycosylated (N-linked (GlcNAc...) asparagine). Positions 39–70 (GFTRKCGRLVKEQRARFYIMRRCVVMLICWTD) are required for DVL/RTFL small polypeptide activity. The chain crosses the membrane as a helical span at residues 55 to 71 (FYIMRRCVVMLICWTDH). N-linked (GlcNAc...) asparagine glycosylation is present at asparagine 74.

Belongs to the DVL/RTFL small polypeptides family.

It localises to the cell membrane. Its function is as follows. Small polypeptide acting as a regulatory molecule which coordinates cellular responses required for differentiation, growth and development, probably by restricting polar cell proliferation in lateral organs and coordinating socket cell recruitment and differentiation at trichome sites. This is Small polypeptide DEVIL 8 from Arabidopsis thaliana (Mouse-ear cress).